Reading from the N-terminus, the 270-residue chain is Large ribosomal subunit protein uL2c (270 aa).

The interval 221–245 is disordered; the sequence is NPIDHPHGGGEGRAPIGRNQPKTPW.

This sequence belongs to the universal ribosomal protein uL2 family. Part of the 50S ribosomal subunit.

The protein resides in the plastid. The polypeptide is Large ribosomal subunit protein uL2c (rpl2) (Cuscuta gronovii (Common dodder)).